The following is a 250-amino-acid chain: Kallikrein-14 (250 aa).

The N-terminal stretch at 1–18 (MFLLLIILQALAVAIAQS) is a signal peptide. The propeptide at 19–23 (QGDHK) is activation peptide. The Peptidase S1 domain maps to 24–248 (IIGGYRCVRN…YHSWIQRTMQ (225 aa)). Cys51 and Cys67 are disulfide-bonded. Residues His66 and Asp110 each act as charge relay system in the active site. 3 disulfides stabilise this stretch: Cys142–Cys209, Cys174–Cys188, and Cys199–Cys224. Ser203 functions as the Charge relay system in the catalytic mechanism.

Belongs to the peptidase S1 family. Kallikrein subfamily. Post-translationally, proteolytic cleavage of the activation peptide produces the active enzyme.

It is found in the secreted. The protein resides in the extracellular space. Inhibited by SERPINA1, SERPINC1, SERPINE1, SERPINF2, aprotinin, soybean, trypsin inhibitor and leupeptin. Inhibited by serine protease inhibitor SPINK5. Has an autoproteolytic activity which may have a regulatory effect. Activated by citrate and inhibited by zinc and to a lower extent by manganese. Its function is as follows. Serine-type endopeptidase with a dual trypsin-like and chymotrypsin-like substrate specificity. May activate/inactivate the proteinase-activated receptors F2R, F2RL1 and F2RL3 and other kallikreins including KLK1, KLK3, KLK5 and KLK11. May function in seminal clot liquefaction through direct cleavage of the semenogelin SEMG1 and SEMG2 and activation of KLK3. May function through desmoglein DSG1 cleavage in epidermal desquamation a process by which the most superficial corneocytes are shed from the skin surface. May be involved in several aspects of tumor progression including growth, invasion and angiogenesis. The sequence is that of Kallikrein-14 (Klk14) from Mus musculus (Mouse).